The chain runs to 600 residues: RNA-binding protein 47 (600 aa).

Positions 1–25 (MTAEDSASAVAMSNPSPSSSSKSSS) are enriched in low complexity. Residues 1-37 (MTAEDSASAVAMSNPSPSSSSKSSSGHPQHHCTVPEG) are disordered. RRM domains are found at residues 82 to 160 (CEIF…SSVD), 162 to 244 (CRLF…WAEP), and 257 to 329 (KILY…LAKP).

This sequence belongs to the RRM RBM47 family. In terms of assembly, homodimer. May interact with MAVS; may regulate MAVS lysosomal degradation.

It localises to the nucleus. It is found in the cytoplasm. Its function is as follows. Single-stranded RNA-binding protein that functions in a variety of RNA processes, including alternative splicing, RNA stabilization, and RNA editing. Independently of its RNA-binding activity, could negatively regulate MAVS by promoting its lysosomal degradation. The sequence is that of RNA-binding protein 47 (rbm47) from Danio rerio (Zebrafish).